Consider the following 172-residue polypeptide: Large ribosomal subunit protein uL10 (172 aa).

The protein belongs to the universal ribosomal protein uL10 family. In terms of assembly, part of the ribosomal stalk of the 50S ribosomal subunit. The N-terminus interacts with L11 and the large rRNA to form the base of the stalk. The C-terminus forms an elongated spine to which L12 dimers bind in a sequential fashion forming a multimeric L10(L12)X complex.

In terms of biological role, forms part of the ribosomal stalk, playing a central role in the interaction of the ribosome with GTP-bound translation factors. This chain is Large ribosomal subunit protein uL10, found in Rhodospirillum centenum (strain ATCC 51521 / SW).